The sequence spans 66 residues: Large ribosomal subunit protein bL35 (66 aa).

Belongs to the bacterial ribosomal protein bL35 family.

This chain is Large ribosomal subunit protein bL35, found in Caulobacter sp. (strain K31).